A 288-amino-acid chain; its full sequence is Beta-lactamase PSE-1 (288 aa).

The first 17 residues, 1-17 (MKFLLAFSLLIPSVVFA), serve as a signal peptide directing secretion. Serine 65 acts as the Acyl-ester intermediate in catalysis. Cysteine 72 and cysteine 118 are joined by a disulfide. 229–231 (RSG) lines the substrate pocket.

This sequence belongs to the class-A beta-lactamase family. Monomer.

It catalyses the reaction a beta-lactam + H2O = a substituted beta-amino acid. With respect to regulation, inhibited by p-chloromercuribenzoate but not by cloxacillin. In terms of biological role, hydrolyzes penicillin, ampicillin and carbenicillin but not other antibiotics including oxacillin, methicillin and cloxacillin. The chain is Beta-lactamase PSE-1 from Pseudomonas aeruginosa.